The chain runs to 33 residues: Dermaseptin-4 (33 aa).

Leu-33 is subject to Leucine amide.

Expressed by the skin glands.

It is found in the secreted. Functionally, has antiparasitic activity against trypomastigote form of T.cruzi (IC(50)=0.25 uM) in vitro but not against L.infantum. Probably acts by permeabilizing cell membranes. In vitro, shows no cytotoxicity against macrophages. Has antibacterial activity. In Pithecopus nordestinus (Northeastern Brazilian leaf frog), this protein is Dermaseptin-4.